Consider the following 982-residue polypeptide: Probable beta-galactosidase C (982 aa).

A signal peptide spans 1 to 21; the sequence is MRLFALLPVLLGLISSHFVSA. Substrate contacts are provided by tyrosine 80, asparagine 125, alanine 126, glutamate 127, and asparagine 185. The Proton donor role is filled by glutamate 186. Residue tyrosine 249 participates in substrate binding. A disulfide bond links cysteine 255 and cysteine 302. Asparagine 274 carries an N-linked (GlcNAc...) asparagine glycan. The Nucleophile role is filled by glutamate 285. A substrate-binding site is contributed by tyrosine 351. Residues asparagine 389, asparagine 434, asparagine 600, asparagine 675, asparagine 718, and asparagine 785 are each glycosylated (N-linked (GlcNAc...) asparagine).

The protein belongs to the glycosyl hydrolase 35 family.

The protein resides in the secreted. The enzyme catalyses Hydrolysis of terminal non-reducing beta-D-galactose residues in beta-D-galactosides.. Cleaves beta-linked terminal galactosyl residues from gangliosides, glycoproteins, and glycosaminoglycans. The protein is Probable beta-galactosidase C (lacC) of Penicillium rubens (strain ATCC 28089 / DSM 1075 / NRRL 1951 / Wisconsin 54-1255) (Penicillium chrysogenum).